A 378-amino-acid polypeptide reads, in one-letter code: tRNA (guanine(26)-N(2))-dimethyltransferase (378 aa).

The Trm1 methyltransferase domain occupies 4 to 374 (KEVTEGKVRI…KGYEEIIRCV (371 aa)). The S-adenosyl-L-methionine site is built by arginine 44, arginine 69, aspartate 87, aspartate 114, and alanine 115. Zn(2+) contacts are provided by cysteine 246, cysteine 249, cysteine 263, and cysteine 266.

Belongs to the class I-like SAM-binding methyltransferase superfamily. Trm1 family.

The catalysed reaction is guanosine(26) in tRNA + 2 S-adenosyl-L-methionine = N(2)-dimethylguanosine(26) in tRNA + 2 S-adenosyl-L-homocysteine + 2 H(+). Its function is as follows. Dimethylates a single guanine residue at position 26 of a number of tRNAs using S-adenosyl-L-methionine as donor of the methyl groups. This chain is tRNA (guanine(26)-N(2))-dimethyltransferase, found in Saccharolobus islandicus (strain M.14.25 / Kamchatka #1) (Sulfolobus islandicus).